Reading from the N-terminus, the 1515-residue chain is Neurite extension and migration factor (1515 aa).

The span at 381 to 405 shows a compositional bias: basic and acidic residues; it reads DKKKGKEEVHEDKSIETKDEKDNGE. Disordered regions lie at residues 381–415, 505–529, 731–774, 1158–1225, 1372–1422, and 1435–1479; these read DKKK…KPCG, VNER…PKKR, KKIK…HMSE, FDEP…TKKG, TPQE…EDSR, and TLGN…AGTT. Composition is skewed to polar residues over residues 746-757 and 763-772; these read SPVSEDTSSKAN and TPGTSNSSHM. The span at 1180–1193 shows a compositional bias: low complexity; the sequence is PGKSGAVSQSSSQK. Residues 1442 to 1452 are compositionally biased toward basic residues; sequence THKKLYRHKSS. Over residues 1455–1479 the composition is skewed to basic and acidic residues; the sequence is GLRDEKYKGKRVEREQAHKDEAGTT.

In terms of tissue distribution, expressed in the brain, particularly during the late embryonic and perinatal stages of development. In the developing brain, it is expressed only in the cortical plate and subplate region but not in the intermediate or ventricular zone.

Its subcellular location is the nucleus. It localises to the cytoplasm. In terms of biological role, involved in neurite outgrowth by regulating cell-cell adhesion via the N-cadherin signaling pathway. May act by regulating expression of protein-coding genes, such as N-cadherins and integrin beta-1 (ITGB1). In Mus musculus (Mouse), this protein is Neurite extension and migration factor.